The primary structure comprises 466 residues: A-type ATP synthase subunit B (466 aa).

This sequence belongs to the ATPase alpha/beta chains family. In terms of assembly, has multiple subunits with at least A(3), B(3), C, D, E, F, H, I and proteolipid K(x).

It localises to the cell membrane. Functionally, component of the A-type ATP synthase that produces ATP from ADP in the presence of a proton gradient across the membrane. The B chain is a regulatory subunit. The sequence is that of A-type ATP synthase subunit B from Sulfolobus acidocaldarius (strain ATCC 33909 / DSM 639 / JCM 8929 / NBRC 15157 / NCIMB 11770).